The following is a 211-amino-acid chain: Ribosomal RNA small subunit methyltransferase G (211 aa).

S-adenosyl-L-methionine-binding positions include Gly-73, 125-126 (IE), and Arg-141.

This sequence belongs to the methyltransferase superfamily. RNA methyltransferase RsmG family.

It is found in the cytoplasm. It carries out the reaction guanosine(527) in 16S rRNA + S-adenosyl-L-methionine = N(7)-methylguanosine(527) in 16S rRNA + S-adenosyl-L-homocysteine. Specifically methylates the N7 position of guanine in position 527 of 16S rRNA. The polypeptide is Ribosomal RNA small subunit methyltransferase G (Methylobacterium radiotolerans (strain ATCC 27329 / DSM 1819 / JCM 2831 / NBRC 15690 / NCIMB 10815 / 0-1)).